The following is a 120-amino-acid chain: Large ribosomal subunit protein bL17 (120 aa).

This sequence belongs to the bacterial ribosomal protein bL17 family. As to quaternary structure, part of the 50S ribosomal subunit. Contacts protein L32.

In Halalkalibacterium halodurans (strain ATCC BAA-125 / DSM 18197 / FERM 7344 / JCM 9153 / C-125) (Bacillus halodurans), this protein is Large ribosomal subunit protein bL17.